The primary structure comprises 344 residues: Cell cycle control protein 50C (344 aa).

Topologically, residues 1-34 are cytoplasmic; that stretch reads MEETPQHCLSRLPDNSALKQQELPAHRLYFTARR. A helical membrane pass occupies residues 35 to 55; it reads VLFVFFTTGIFCLCMGIILIL. Residues 56–306 lie on the Extracellular side of the membrane; it reads SARSTQEIEI…STLTWCGGNS (251 aa). 2 N-linked (GlcNAc...) asparagine glycosylation sites follow: N66 and N261. Residues 307-327 form a helical membrane-spanning segment; sequence LFLGLAYTVTGAITWLASFTM. Residues 328–344 lie on the Cytoplasmic side of the membrane; that stretch reads MAIHITLKNKQMSFFHQ.

The protein belongs to the CDC50/LEM3 family. As to expression, specifically expressed in testis.

Its subcellular location is the membrane. This Macaca fascicularis (Crab-eating macaque) protein is Cell cycle control protein 50C (TMEM30C).